A 539-amino-acid chain; its full sequence is Chaperonin GroEL (539 aa).

ATP contacts are provided by residues 30 to 33, 87 to 91, G414, 479 to 481, and D495; these read TLGP, DGTTT, and DAL.

This sequence belongs to the chaperonin (HSP60) family. In terms of assembly, forms a cylinder of 14 subunits composed of two heptameric rings stacked back-to-back. Interacts with the co-chaperonin GroES.

It is found in the cytoplasm. It catalyses the reaction ATP + H2O + a folded polypeptide = ADP + phosphate + an unfolded polypeptide.. In terms of biological role, together with its co-chaperonin GroES, plays an essential role in assisting protein folding. The GroEL-GroES system forms a nano-cage that allows encapsulation of the non-native substrate proteins and provides a physical environment optimized to promote and accelerate protein folding. This is Chaperonin GroEL from Caldicellulosiruptor saccharolyticus (strain ATCC 43494 / DSM 8903 / Tp8T 6331).